Consider the following 181-residue polypeptide: Inner membrane-spanning protein YciB (181 aa).

The next 5 membrane-spanning stretches (helical) occupy residues 22-42 (IYTATGALIIATAIQLVVTYA), 50-70 (MQLITFIMVTVFGGMTIFLHD), 80-100 (IVYCVFAAGLIIAHILGKPVI), 122-142 (WVLFFTVCAIANLYVAFEMPL), and 148-168 (FKVFGLLGLTFLYTLFTGMYV).

The protein belongs to the YciB family.

The protein resides in the cell inner membrane. In terms of biological role, plays a role in cell envelope biogenesis, maintenance of cell envelope integrity and membrane homeostasis. This chain is Inner membrane-spanning protein YciB, found in Aliivibrio fischeri (strain MJ11) (Vibrio fischeri).